The chain runs to 833 residues: Serine/threonine-protein phosphatase 4 regulatory subunit 3A (833 aa).

The region spanning Met1 to Val100 is the WH1 domain. Phosphoserine is present on residues Ser117 and Ser127. Lys655 bears the N6-acetyllysine mark. The span at Phe683–Glu694 shows a compositional bias: acidic residues. Disordered regions lie at residues Phe683–Pro712 and Lys733–Ser833. 7 positions are modified to phosphoserine: Ser698, Ser741, Ser768, Ser771, Ser774, Ser777, and Ser780. Residues Thr734–Gly751 show a composition bias toward polar residues. Residues Thr752–Ser768 are compositionally biased toward low complexity. Residues Pro785–Ile794 are compositionally biased toward polar residues. Over residues Tyr806–Glu820 the composition is skewed to acidic residues.

It belongs to the SMEK family. As to quaternary structure, serine/threonine-protein phosphatase 4 (PP4) occurs in different assemblies of the catalytic and one or more regulatory subunits. Component of the PP4 complex PPP4C-PPP4R2-PPP4R3A. Interacts with PPP4C; the interaction requires PPP4R2.

The protein localises to the cytoplasm. Its subcellular location is the cytoskeleton. The protein resides in the microtubule organizing center. It localises to the centrosome. It is found in the nucleus. Regulatory subunit of serine/threonine-protein phosphatase 4. May regulate the activity of PPP4C at centrosomal microtubule organizing centers. The PPP4C-PPP4R2-PPP4R3A PP4 complex specifically dephosphorylates H2AX phosphorylated on 'Ser-140' (gamma-H2AX) generated during DNA replication and required for DNA DSB repair. The polypeptide is Serine/threonine-protein phosphatase 4 regulatory subunit 3A (Homo sapiens (Human)).